Consider the following 333-residue polypeptide: Squamosa promoter-binding-like protein 8 (333 aa).

The segment at 1–28 (MLDYEWDNPSSIVLSGDERNPDSDPTRS) is disordered. The segment covering 16–25 (GDERNPDSDP) has biased composition (basic and acidic residues). A sufficient and necessary for DNA binding region spans residues 179–269 (MANSLSTPRC…RKCHQSASAT (91 aa)). Residues 185–262 (TPRCQAEGCN…ADHNRRRRKC (78 aa)) form an SBP-type zinc finger. Zn(2+) contacts are provided by C188, C193, C210, H213, C229, C232, H236, and C248. The Bipartite nuclear localization signal signature appears at 245 to 261 (KRSCRKRLADHNRRRRK). Disordered regions lie at residues 254–303 (DHNR…TISL) and 314–333 (TASSSTSASSSSNSMFFSSG). The segment covering 264–284 (QSASATQDTGTGKTTPKSPND) has biased composition (polar residues). The span at 289–299 (ASSSPSSNAPP) shows a compositional bias: low complexity.

It depends on Zn(2+) as a cofactor. As to expression, expressed in shoot apical region and early floral tissues. Transcripts levels increase in developing pollen sacs, and decrease in later stage of anther development. Strongly expressed in the placental region of the carpels.

Its subcellular location is the nucleus. It localises to the cytoplasm. Functionally, trans-acting factor that binds specifically to the consensus nucleotide sequence 5'-TNCGTACAA-3'. Binds specifically to the 5'-GTAC-3' core sequence. Involved in development and floral organogenesis. Required for ovule differentiation, pollen production, filament elongation, seed formation and siliques elongation. Also seems to play a role in the formation of trichomes on sepals. May positively modulate gibberellin (GA) signaling in flower. The protein is Squamosa promoter-binding-like protein 8 (SPL8) of Arabidopsis thaliana (Mouse-ear cress).